A 37-amino-acid chain; its full sequence is Potassium channel toxin alpha-KTx 2.14 (37 aa).

Intrachain disulfides connect Cys7–Cys28, Cys13–Cys33, and Cys17–Cys35.

It belongs to the short scorpion toxin superfamily. Potassium channel inhibitor family. Alpha-KTx 02 subfamily. In terms of tissue distribution, expressed by the venom gland.

The protein localises to the secreted. Its function is as follows. Reversibly blocks hKv1.1/KCNA1 (50% inhibition of current at 1 uM). Seems not to be voltage-dependent. In Heteroctenus garridoi (Cuban scorpion), this protein is Potassium channel toxin alpha-KTx 2.14.